The following is a 227-amino-acid chain: MTIELTPGGLLIAIEGIDGAGKTTLARSLATLLEQAGARVVLSKEPTNGPWGTQLRQSAATGRLSAQDEVDLLLRDRREHVEALIAPALARGEIVILDRYFPSMVAYQGAAGLPLDALLAANDFAPRPDLLLLLDLPPPTGLARIRARGDAPNHFETQDNLERCRAIFAALQLPGKHVIDASADADSVLRQAHAVVVAALADRLRVGATHTDAEKAALELLSAGRPA.

16–23 (GIDGAGKT) contacts ATP.

This sequence belongs to the thymidylate kinase family.

It carries out the reaction dTMP + ATP = dTDP + ADP. In terms of biological role, phosphorylation of dTMP to form dTDP in both de novo and salvage pathways of dTTP synthesis. The sequence is that of Thymidylate kinase from Xanthomonas campestris pv. campestris (strain 8004).